The chain runs to 66 residues: Large ribosomal subunit protein bL31 (66 aa).

C16, C18, C36, and C39 together coordinate Zn(2+).

It belongs to the bacterial ribosomal protein bL31 family. Type A subfamily. As to quaternary structure, part of the 50S ribosomal subunit. It depends on Zn(2+) as a cofactor.

In terms of biological role, binds the 23S rRNA. This chain is Large ribosomal subunit protein bL31, found in Natranaerobius thermophilus (strain ATCC BAA-1301 / DSM 18059 / JW/NM-WN-LF).